We begin with the raw amino-acid sequence, 792 residues long: Alpha-1,6-mannosylglycoprotein 6-beta-N-acetylglucosaminyltransferase B (792 aa).

The Cytoplasmic segment spans residues 1–24 (MITVNPDGKIMVRRCLVTLRPFRL). Residues 25-45 (FVLGIGFFTLCFLMTSLGGQF) traverse the membrane as a helical; Signal-anchor for type II membrane protein segment. Residues 46–792 (SARRLGDSPF…GQVALCQGCL (747 aa)) lie on the Lumenal side of the membrane. Asparagine 127 carries an N-linked (GlcNAc...) asparagine glycan. 4 disulfide bridges follow: cysteine 157–cysteine 195, cysteine 168–cysteine 208, cysteine 184–cysteine 353, and cysteine 387–cysteine 644. Asparagine 675 is a glycosylation site (N-linked (GlcNAc...) asparagine). 5 disulfides stabilise this stretch: cysteine 700–cysteine 775, cysteine 704–cysteine 777, cysteine 711–cysteine 764, cysteine 732–cysteine 753, and cysteine 788–cysteine 791.

This sequence belongs to the glycosyltransferase 18 family. Requires Mn(2+) as cofactor. As to expression, present in brain (at protein level). Predominantly expressed in hippocampus, superficial layers of the brain cortex, striatum, nucleus accumbens, a subset of nuclei in the thalamus, inferior colliculus, brain stem and cerebellum.

The protein localises to the golgi apparatus membrane. It catalyses the reaction N(4)-{beta-D-GlcNAc-(1-&gt;2)-[beta-D-GlcNAc-(1-&gt;4)]-alpha-D-Man-(1-&gt;3)-[beta-D-GlcNAc-(1-&gt;2)-alpha-D-Man-(1-&gt;6)]-beta-D-Man-(1-&gt;4)-beta-D-GlcNAc-(1-&gt;4)-beta-D-GlcNAc}-L-asparaginyl-[protein] + UDP-N-acetyl-alpha-D-glucosamine = N(4)-{beta-D-GlcNAc-(1-&gt;2)-[beta-D-GlcNAc-(1-&gt;4)]-alpha-D-Man-(1-&gt;3)-[beta-D-GlcNAc-(1-&gt;2)-[beta-D-GlcNAc-(1-&gt;6)]-alpha-D-Man-(1-&gt;6)]-beta-D-Man-(1-&gt;4)-beta-D-GlcNAc-(1-&gt;4)-beta-D-GlcNAc}-L-asparaginyl-[protein] + UDP + H(+). The enzyme catalyses 3-O-[N-acetyl-beta-D-glucosaminyl-(1-&gt;2)-alpha-D-mannosyl]-L-seryl-[protein] + UDP-N-acetyl-alpha-D-glucosamine = O(3)-{N-acetyl-beta-D-glucosaminyl-(1-&gt;2)-[N-acetyl-beta-D-glucosaminyl-(1-&gt;6)]-alpha-D-mannosyl}-L-seryl-[protein] + UDP + H(+). It carries out the reaction 3-O-[N-acetyl-beta-D-glucosaminyl-(1-&gt;2)-alpha-D-mannosyl]-L-threonyl-[protein] + UDP-N-acetyl-alpha-D-glucosamine = O(3)-{N-acetyl-beta-D-glucosaminyl-(1-&gt;2)-[N-acetyl-beta-D-glucosaminyl-(1-&gt;6)]-alpha-D-mannosyl}-L-threonyl-[protein] + UDP + H(+). The protein operates within protein modification; protein glycosylation. Glycosyltransferase that acts on alpha-linked mannose of N-glycans and O-mannosyl glycans. Catalyzes the transfer of N-acetylglucosamine (GlcNAc) to the beta 1-6 linkage of the mannose residue of GlcNAc-beta1,2-Man-alpha on both the alpha1,3- and alpha1,6-linked mannose arms in the core structure of N-glycan. Also acts on the GlcNAc-beta1,2-Man-alpha1-Ser/Thr moiety, forming a 2,6-branched structure in brain O-mannosyl glycan. Plays an active role in modulating integrin and laminin-dependent adhesion and migration of neuronal cells via its activity in the O-mannosyl glycan pathway. The sequence is that of Alpha-1,6-mannosylglycoprotein 6-beta-N-acetylglucosaminyltransferase B (Mgat5b) from Mus musculus (Mouse).